The sequence spans 387 residues: O-phospho-L-seryl-tRNA:Cys-tRNA synthase 2 (387 aa).

Pyridoxal 5'-phosphate is bound by residues A89 to R90, N196, and S219 to H221. At K222 the chain carries N6-(pyridoxal phosphate)lysine.

It belongs to the SepCysS family. Homodimer. Interacts with SepRS. It depends on pyridoxal 5'-phosphate as a cofactor.

The catalysed reaction is O-phospho-L-seryl-tRNA(Cys) + hydrogen sulfide + H(+) = L-cysteinyl-tRNA(Cys) + phosphate. Functionally, converts O-phospho-L-seryl-tRNA(Cys) (Sep-tRNA(Cys)) to L-cysteinyl-tRNA(Cys) (Cys-tRNA(Cys)). This Methanococcoides burtonii (strain DSM 6242 / NBRC 107633 / OCM 468 / ACE-M) protein is O-phospho-L-seryl-tRNA:Cys-tRNA synthase 2.